The primary structure comprises 97 residues: MANNKSAKKRIQVAERNRLVNKSYKSTVRTLTKKTLANCEKYKQEPNSDNKDLVLVSVNQAFSLIDKAVKKNVLHKNNGANKKSKINKVVKDFLTSK.

This sequence belongs to the bacterial ribosomal protein bS20 family.

Functionally, binds directly to 16S ribosomal RNA. The chain is Small ribosomal subunit protein bS20 from Prochlorococcus marinus subsp. pastoris (strain CCMP1986 / NIES-2087 / MED4).